A 124-amino-acid chain; its full sequence is Small ribosomal subunit protein uS12 (124 aa).

The residue at position 89 (D89) is a 3-methylthioaspartic acid. Positions 105 to 124 are disordered; the sequence is QGVKNRKQARSRYGAKKEKS. Residues 108–118 are compositionally biased toward basic residues; sequence KNRKQARSRYG.

This sequence belongs to the universal ribosomal protein uS12 family. In terms of assembly, part of the 30S ribosomal subunit. Contacts proteins S8 and S17. May interact with IF1 in the 30S initiation complex.

In terms of biological role, with S4 and S5 plays an important role in translational accuracy. Functionally, interacts with and stabilizes bases of the 16S rRNA that are involved in tRNA selection in the A site and with the mRNA backbone. Located at the interface of the 30S and 50S subunits, it traverses the body of the 30S subunit contacting proteins on the other side and probably holding the rRNA structure together. The combined cluster of proteins S8, S12 and S17 appears to hold together the shoulder and platform of the 30S subunit. The protein is Small ribosomal subunit protein uS12 of Mycobacteroides abscessus (strain ATCC 19977 / DSM 44196 / CCUG 20993 / CIP 104536 / JCM 13569 / NCTC 13031 / TMC 1543 / L948) (Mycobacterium abscessus).